The sequence spans 716 residues: Antibacterial effector protein Tle3 (716 aa).

Residues 68–87 (PTLPGGQANPGYLTPAGYSL) form a disordered region.

Interacts in the cytoplasm with the adapter protein Tla3. Interacts in the periplasm with the immunity protein Tli3.

It is found in the secreted. Its subcellular location is the host periplasm. With respect to regulation, neutralized by the immunity protein Tli3 in the periplasm of P.aeruginosa cells. Antibacterial effector. Is toxic once delivered in the periplasm of prey bacteria. This chain is Antibacterial effector protein Tle3, found in Pseudomonas aeruginosa (strain ATCC 15692 / DSM 22644 / CIP 104116 / JCM 14847 / LMG 12228 / 1C / PRS 101 / PAO1).